We begin with the raw amino-acid sequence, 614 residues long: V-type proton ATPase catalytic subunit A (614 aa).

247 to 254 contacts ATP; it reads GAFGCGKT.

The protein belongs to the ATPase alpha/beta chains family. V-ATPase is a heteromultimeric enzyme made up of two complexes: the ATP-hydrolytic V1 complex and the proton translocation V0 complex. The V1 complex consists of three catalytic AB heterodimers that form a heterohexamer, three peripheral stalks each consisting of EG heterodimers, one central rotor including subunits D and F, and the regulatory subunits C and H. The proton translocation complex V0 consists of the proton transport subunit a, a ring of proteolipid subunits c9c'', rotary subunit d, subunits e and f, and the accessory subunits VhaAC45 and ATP6AP2.

It carries out the reaction ATP + H2O + 4 H(+)(in) = ADP + phosphate + 5 H(+)(out). Its activity is regulated as follows. ATP hydrolysis occurs at the interface between the nucleotide-binding domains of subunits A and B. ATP hydrolysis triggers a conformational change in the subunits D and F, which induces a shift of subunit d. The c-ring is subsequently rotated and results in a continuous proton translocation across the membrane. Its function is as follows. Catalytic subunit of the V1 complex of vacuolar(H+)-ATPase (V-ATPase), a multisubunit enzyme composed of a peripheral complex (V1) that hydrolyzes ATP and a membrane integral complex (V0) that translocates protons. V-ATPase is responsible for acidifying and maintaining the pH of intracellular compartments and in some cell types, is targeted to the plasma membrane, where it is responsible for acidifying the extracellular environment. The protein is V-type proton ATPase catalytic subunit A (VhaA) of Aedes aegypti (Yellowfever mosquito).